The sequence spans 190 residues: Potassium-transporting ATPase KdpC subunit (190 aa).

Residues 9–29 (VMFILFTIICGGIYPSVVTGI) form a helical membrane-spanning segment.

The protein belongs to the KdpC family. In terms of assembly, the system is composed of three essential subunits: KdpA, KdpB and KdpC.

It localises to the cell inner membrane. In terms of biological role, part of the high-affinity ATP-driven potassium transport (or Kdp) system, which catalyzes the hydrolysis of ATP coupled with the electrogenic transport of potassium into the cytoplasm. This subunit acts as a catalytic chaperone that increases the ATP-binding affinity of the ATP-hydrolyzing subunit KdpB by the formation of a transient KdpB/KdpC/ATP ternary complex. This chain is Potassium-transporting ATPase KdpC subunit, found in Citrifermentans bemidjiense (strain ATCC BAA-1014 / DSM 16622 / JCM 12645 / Bem) (Geobacter bemidjiensis).